The following is a 247-amino-acid chain: Fasciclin-like arabinogalactan protein 13 (247 aa).

A signal peptide spans 1-25 (MATTPLLLLLLTAVFLSTEITAQRA). The region spanning 34-179 (PINITAILEK…LAVYVVDMVL (146 aa)) is the FAS1 domain. Residues Asn36, Asn55, Asn68, Asn141, and Asn150 are each glycosylated (N-linked (GlcNAc...) asparagine). The segment at 189–228 (KISPMAPPPKSKSPDVSDDSESSKKAAAPSESEKSGSGEM) is disordered. Gly224 carries the GPI-anchor amidated glycine lipid modification. Positions 225-247 (SGEMNTGLGLGLGLVVLCLKFLL) are cleaved as a propeptide — removed in mature form.

The protein belongs to the fasciclin-like AGP family.

The protein localises to the cell membrane. Its function is as follows. May be a cell surface adhesion protein. The protein is Fasciclin-like arabinogalactan protein 13 (FLA13) of Arabidopsis thaliana (Mouse-ear cress).